The sequence spans 404 residues: Serine/threonine transporter SstT (404 aa).

A run of 8 helical transmembrane segments spans residues 17 to 37 (IGIG…LTGF), 39 to 59 (ILGK…VFAL), 75 to 95 (MTLI…VAVL), 138 to 158 (ALAT…GLAL), 179 to 199 (IVVW…FTTI), 212 to 232 (FLIL…NPLI), 287 to 307 (IPLG…VLTL), and 313 to 333 (FGIP…AVSA).

It belongs to the dicarboxylate/amino acid:cation symporter (DAACS) (TC 2.A.23) family.

Its subcellular location is the cell membrane. It carries out the reaction L-serine(in) + Na(+)(in) = L-serine(out) + Na(+)(out). It catalyses the reaction L-threonine(in) + Na(+)(in) = L-threonine(out) + Na(+)(out). Involved in the import of serine and threonine into the cell, with the concomitant import of sodium (symport system). The polypeptide is Serine/threonine transporter SstT (Streptococcus pyogenes serotype M1).